Reading from the N-terminus, the 915-residue chain is Alpha-xylosidase 1 (915 aa).

The first 27 residues, 1-27 (MASSSSSLAFSLSLLLALILCFSPTQS), serve as a signal peptide directing secretion. N-linked (GlcNAc...) asparagine glycans are attached at residues N153, N304, and N375. Catalysis depends on residues D440 and E443. N476 and N490 each carry an N-linked (GlcNAc...) asparagine glycan. The Proton donor role is filled by D563. 3 N-linked (GlcNAc...) asparagine glycosylation sites follow: N819, N888, and N907.

This sequence belongs to the glycosyl hydrolase 31 family. Expressed in roots, stems, leaves, flowers and siliques. Expressed in cell types undergoing cell wall modifications, including trichomes, vasculature, stomata, and elongating anther filaments. Not detected in pollen.

It is found in the secreted. The protein localises to the cell wall. The protein resides in the extracellular space. It localises to the apoplast. It carries out the reaction Hydrolysis of terminal, non-reducing alpha-D-xylose residues with release of alpha-D-xylose.. Glycoside hydrolase releasing xylosyl residues from xyloglucan oligosaccharides at the non-reducing end. Has alpha-xylosidase activity against xylan oligosaccharides. Also has alpha-glucosidase activity against p-nitrophenyl-alpha-D-glucopyranoside. No activity against p-nitrophenyl-D-xyloside. This chain is Alpha-xylosidase 1, found in Arabidopsis thaliana (Mouse-ear cress).